The following is a 527-amino-acid chain: ATP synthase subunit alpha (527 aa).

An ATP-binding site is contributed by 172-179; it reads GDRQTGKT.

Belongs to the ATPase alpha/beta chains family. F-type ATPases have 2 components, CF(1) - the catalytic core - and CF(0) - the membrane proton channel. CF(1) has five subunits: alpha(3), beta(3), gamma(1), delta(1), epsilon(1). CF(0) has three main subunits: a(1), b(2) and c(9-12). The alpha and beta chains form an alternating ring which encloses part of the gamma chain. CF(1) is attached to CF(0) by a central stalk formed by the gamma and epsilon chains, while a peripheral stalk is formed by the delta and b chains.

The protein localises to the cell inner membrane. The enzyme catalyses ATP + H2O + 4 H(+)(in) = ADP + phosphate + 5 H(+)(out). Its function is as follows. Produces ATP from ADP in the presence of a proton gradient across the membrane. The alpha chain is a regulatory subunit. The sequence is that of ATP synthase subunit alpha from Bacteroides thetaiotaomicron (strain ATCC 29148 / DSM 2079 / JCM 5827 / CCUG 10774 / NCTC 10582 / VPI-5482 / E50).